Reading from the N-terminus, the 515-residue chain is Maturase K (515 aa).

This sequence belongs to the intron maturase 2 family. MatK subfamily.

It is found in the plastid. The protein localises to the chloroplast. Usually encoded in the trnK tRNA gene intron. Probably assists in splicing its own and other chloroplast group II introns. The chain is Maturase K from Pseudotsuga menziesii (Douglas-fir).